Consider the following 795-residue polypeptide: Antibiotic resistant DNA gyrase subunit B (795 aa).

The region spanning 421 to 536 (SELYLVEGNS…RGYIYIAQPP (116 aa)) is the Toprim domain. Positions 427, 501, and 503 each coordinate Mg(2+).

It belongs to the type II topoisomerase GyrB family. As to quaternary structure, heterotetramer, composed of two GyrA and two GyrB chains. In the heterotetramer, GyrA contains the active site tyrosine that forms a transient covalent intermediate with DNA, while GyrB binds cofactors and catalyzes ATP hydrolysis. Mg(2+) serves as cofactor. Mn(2+) is required as a cofactor. The cofactor is Ca(2+).

It is found in the cytoplasm. The enzyme catalyses ATP-dependent breakage, passage and rejoining of double-stranded DNA.. Functionally, a type II topoisomerase that negatively supercoils closed circular double-stranded (ds) DNA in an ATP-dependent manner to modulate DNA topology and maintain chromosomes in an underwound state. Negative supercoiling favors strand separation, and DNA replication, transcription, recombination and repair, all of which involve strand separation. Also able to catalyze the interconversion of other topological isomers of dsDNA rings, including catenanes and knotted rings. Type II topoisomerases break and join 2 DNA strands simultaneously in an ATP-dependent manner. This Neisseria gonorrhoeae protein is Antibiotic resistant DNA gyrase subunit B.